Consider the following 575-residue polypeptide: Intermediate filament protein ifa-1 (575 aa).

Disordered regions lie at residues 1-30 (MMEI…TGNV) and 45-72 (SGAG…EKKE). The interval 1-72 (MMEITRETMS…RDSREREKKE (72 aa)) is head. Positions 7 to 17 (ETMSFTSTTPS) are enriched in polar residues. Residues 63 to 72 (RDSREREKKE) show a composition bias toward basic and acidic residues. In terms of domain architecture, IF rod spans 69–422 (EKKEMSDLND…KMLEGEENRA (354 aa)). The tract at residues 73 to 104 (MSDLNDRLASYIEKVRFLEAQNRKLAADLDAL) is coil 1A. A linker 1 region spans residues 105–118 (RSKWGKDTHNIRNM). A coil 1B region spans residues 119–256 (YEGELVDAQK…RVHDNEIKEL (138 aa)). Residues 257-274 (QTLASRDTTPENREFFKN) form a linker 12 region. The coil 2 stretch occupies residues 275-422 (ELSSAIRDIR…KMLEGEENRA (148 aa)). The tail stretch occupies residues 423-572 (GLKQLVEQVV…EERATHIQRQ (150 aa)). The 118-residue stretch at 455 to 572 (SRQSFQRSAK…EERATHIQRQ (118 aa)) folds into the LTD domain.

Belongs to the intermediate filament family. In terms of assembly, forms some heteromeric filaments with ifb-1. As to expression, isoform d is abundantly expressed in the marginal cells of the pharynx, forming apicobasally oriented thick filament bundles that are attached to the apical and basal plasma membrane by hemi-adherens junctions. Expression of isoform c is also seen in the excretory cells and in the uterus. Isoform c is detectable in the amphid sensory neurins and the pharyngeal-intestinal valve. Both isoform c and isoform d are expressed in the rectum and vulva and in some neurons of the tail. In larvae, expression is seen in the excretory cell, the vulva, the rectum and in the thick filament bundles of the pharynx. Expression in pharynx begins in late embryos.

The protein localises to the cytoplasm. In terms of biological role, cytoplasmic intermediate filaments make up the structural component of the cytoskeleton providing mechanical strength to cells. Essential protein required during embryogenesis especially for survival past the L1 larva stage, involved in intestine morphogenesis. In Caenorhabditis elegans, this protein is Intermediate filament protein ifa-1 (ifa-1).